The primary structure comprises 113 residues: U11-theraphotoxin-Hhn1r (113 aa).

An N-terminal signal peptide occupies residues 1–21 (MNTVRVTFLLVFVLAVSLGQA). Residues 22–74 (DKDENRMEMQEKTEQGKSYLDFAENLLLQKLEELEAKLLEEDSEESRNSRQKR) constitute a propeptide that is removed on maturation. The interval 61–83 (EEDSEESRNSRQKRCIGEGVPCD) is disordered. 3 cysteine pairs are disulfide-bonded: cysteine 75/cysteine 90, cysteine 82/cysteine 95, and cysteine 89/cysteine 110.

This sequence belongs to the neurotoxin 14 (magi-1) family. 01 (HNTX-16) subfamily. In terms of tissue distribution, expressed by the venom gland.

The protein localises to the secreted. Probable ion channel inhibitor. The protein is U11-theraphotoxin-Hhn1r of Cyriopagopus hainanus (Chinese bird spider).